Reading from the N-terminus, the 483-residue chain is Aspartyl/glutamyl-tRNA(Asn/Gln) amidotransferase subunit B (483 aa).

This sequence belongs to the GatB/GatE family. GatB subfamily. As to quaternary structure, heterotrimer of A, B and C subunits.

The enzyme catalyses L-glutamyl-tRNA(Gln) + L-glutamine + ATP + H2O = L-glutaminyl-tRNA(Gln) + L-glutamate + ADP + phosphate + H(+). It carries out the reaction L-aspartyl-tRNA(Asn) + L-glutamine + ATP + H2O = L-asparaginyl-tRNA(Asn) + L-glutamate + ADP + phosphate + 2 H(+). In terms of biological role, allows the formation of correctly charged Asn-tRNA(Asn) or Gln-tRNA(Gln) through the transamidation of misacylated Asp-tRNA(Asn) or Glu-tRNA(Gln) in organisms which lack either or both of asparaginyl-tRNA or glutaminyl-tRNA synthetases. The reaction takes place in the presence of glutamine and ATP through an activated phospho-Asp-tRNA(Asn) or phospho-Glu-tRNA(Gln). The chain is Aspartyl/glutamyl-tRNA(Asn/Gln) amidotransferase subunit B from Rickettsia bellii (strain RML369-C).